The chain runs to 178 residues: Large ribosomal subunit protein uL6 (178 aa).

It belongs to the universal ribosomal protein uL6 family. In terms of assembly, part of the 50S ribosomal subunit.

Functionally, this protein binds to the 23S rRNA, and is important in its secondary structure. It is located near the subunit interface in the base of the L7/L12 stalk, and near the tRNA binding site of the peptidyltransferase center. This is Large ribosomal subunit protein uL6 from Streptococcus suis (strain 05ZYH33).